The sequence spans 458 residues: tRNA modification GTPase MnmE (458 aa).

(6S)-5-formyl-5,6,7,8-tetrahydrofolate contacts are provided by arginine 26, glutamate 88, and arginine 127. The region spanning 224–378 (GLSTAIIGRP…IEDRINQLFF (155 aa)) is the TrmE-type G domain. Residue asparagine 234 coordinates K(+). GTP is bound by residues 234–239 (NVGKSS), 253–259 (TDIAGTT), and 278–281 (DTAG). Serine 238 provides a ligand contact to Mg(2+). The K(+) site is built by threonine 253, isoleucine 255, and threonine 258. Position 259 (threonine 259) interacts with Mg(2+). Lysine 458 is a (6S)-5-formyl-5,6,7,8-tetrahydrofolate binding site.

This sequence belongs to the TRAFAC class TrmE-Era-EngA-EngB-Septin-like GTPase superfamily. TrmE GTPase family. As to quaternary structure, homodimer. Heterotetramer of two MnmE and two MnmG subunits. K(+) serves as cofactor.

It is found in the cytoplasm. In terms of biological role, exhibits a very high intrinsic GTPase hydrolysis rate. Involved in the addition of a carboxymethylaminomethyl (cmnm) group at the wobble position (U34) of certain tRNAs, forming tRNA-cmnm(5)s(2)U34. The sequence is that of tRNA modification GTPase MnmE from Streptococcus pyogenes serotype M5 (strain Manfredo).